The following is a 428-amino-acid chain: Kynureninase (428 aa).

Pyridoxal 5'-phosphate-binding positions include Thr-104, Thr-105, 132-135, Asp-213, His-216, and Tyr-238; that span reads FPSD. Lys-239 carries the N6-(pyridoxal phosphate)lysine modification. Pyridoxal 5'-phosphate contacts are provided by Trp-267 and Thr-295.

Belongs to the kynureninase family. In terms of assembly, homodimer. It depends on pyridoxal 5'-phosphate as a cofactor.

The catalysed reaction is L-kynurenine + H2O = anthranilate + L-alanine + H(+). It carries out the reaction 3-hydroxy-L-kynurenine + H2O = 3-hydroxyanthranilate + L-alanine + H(+). It participates in amino-acid degradation; L-kynurenine degradation; L-alanine and anthranilate from L-kynurenine: step 1/1. It functions in the pathway cofactor biosynthesis; NAD(+) biosynthesis; quinolinate from L-kynurenine: step 2/3. Catalyzes the cleavage of L-kynurenine (L-Kyn) and L-3-hydroxykynurenine (L-3OHKyn) into anthranilic acid (AA) and 3-hydroxyanthranilic acid (3-OHAA), respectively. This Geobacillus thermodenitrificans (strain NG80-2) protein is Kynureninase.